The chain runs to 124 residues: DLWQFGQMMNDVMREYVVFNYLYYGCYCGWGGIGKPRDATDRCCFVHDCCYGKVTGCNPKTDSYTYTYSEENGDVVCGGDDLCKKQICECDRVAATCFRDNKDTYDTKYWLYGAKNCQEESEPC.

Disulfide bonds link C26-C117, C28-C44, C43-C97, C49-C124, C50-C90, C57-C83, and C77-C88. Residues Y27, G29, and G31 each coordinate Ca(2+). H47 is a catalytic residue. Residue D48 coordinates Ca(2+). E89 is an active-site residue.

It belongs to the phospholipase A2 family. Group II subfamily. D49 sub-subfamily. The cofactor is Ca(2+). As to expression, expressed by the venom gland.

The protein localises to the secreted. It carries out the reaction a 1,2-diacyl-sn-glycero-3-phosphocholine + H2O = a 1-acyl-sn-glycero-3-phosphocholine + a fatty acid + H(+). In terms of biological role, snake venom phospholipase A2 (PLA2) that inhibits collagen- and ADP-induced platelet aggregation. PLA2 catalyzes the calcium-dependent hydrolysis of the 2-acyl groups in 3-sn-phosphoglycerides. This is Acidic phospholipase A2 from Bothrops jararaca (Jararaca).